The following is a 192-amino-acid chain: Imidazoleglycerol-phosphate dehydratase (192 aa).

Belongs to the imidazoleglycerol-phosphate dehydratase family.

It localises to the cytoplasm. It catalyses the reaction D-erythro-1-(imidazol-4-yl)glycerol 3-phosphate = 3-(imidazol-4-yl)-2-oxopropyl phosphate + H2O. Its pathway is amino-acid biosynthesis; L-histidine biosynthesis; L-histidine from 5-phospho-alpha-D-ribose 1-diphosphate: step 6/9. The protein is Imidazoleglycerol-phosphate dehydratase of Staphylococcus aureus (strain MRSA252).